The sequence spans 184 residues: MDLSSLRPAKGAVKNKKRVGRGQGSGNGTTAGKGNNGQQSRSGYKRPIIEGGQVPVYRRLPKFGFTPLDKKPVNTVNLTQIDKWIQDGLVENEITILDLKSLLHASNADYFKILGNGELTSAITITAHAFSKSAEEKIAAAGGTVVKAFRTLEEASKVRDLPFEEALLKPKAKLVKRAKKSTKP.

The segment at 1–45 (MDLSSLRPAKGAVKNKKRVGRGQGSGNGTTAGKGNNGQQSRSGYK) is disordered. Residues 21–35 (RGQGSGNGTTAGKGN) show a composition bias toward gly residues.

It belongs to the universal ribosomal protein uL15 family. As to quaternary structure, part of the 50S ribosomal subunit.

In terms of biological role, binds to the 23S rRNA. In Pelodictyon phaeoclathratiforme (strain DSM 5477 / BU-1), this protein is Large ribosomal subunit protein uL15.